A 115-amino-acid chain; its full sequence is Large ribosomal subunit protein bL19 (115 aa).

Belongs to the bacterial ribosomal protein bL19 family.

Functionally, this protein is located at the 30S-50S ribosomal subunit interface and may play a role in the structure and function of the aminoacyl-tRNA binding site. This chain is Large ribosomal subunit protein bL19, found in Wigglesworthia glossinidia brevipalpis.